Reading from the N-terminus, the 333-residue chain is Mitochondrial glycine transporter (333 aa).

3 Solcar repeats span residues 10–93 (SKST…IRQS), 125–209 (LSNT…GKKR), and 235–319 (HAAS…LIRR). The next 2 helical transmembrane spans lie at 16–41 (FAAG…TRVQ) and 68–94 (GAVP…RQSA). The disordered stretch occupies residues 98–126 (SPLPSSSSSTTTSSSTTTSSSSSSLPKLS). 4 consecutive transmembrane segments (helical) span residues 131-156 (LLAG…VRYE), 184-207 (GYGA…EQGK), 239-265 (INFA…KTRI), and 294-312 (GLAL…AWTV).

This sequence belongs to the mitochondrial carrier (TC 2.A.29) family. SLC25A38 subfamily.

Its subcellular location is the mitochondrion inner membrane. The enzyme catalyses glycine(in) = glycine(out). In terms of biological role, mitochondrial glycine transporter that imports glycine into the mitochondrial matrix. Plays an important role in providing glycine for the first enzymatic step in heme biosynthesis, the condensation of glycine with succinyl-CoA to produce 5-aminolevulinate (ALA) in the mitochondrial matrix. In Chaetomium globosum (strain ATCC 6205 / CBS 148.51 / DSM 1962 / NBRC 6347 / NRRL 1970) (Soil fungus), this protein is Mitochondrial glycine transporter.